The following is a 159-amino-acid chain: Ribosomal RNA large subunit methyltransferase H (159 aa).

S-adenosyl-L-methionine-binding positions include Leu76, Gly108, and 127 to 132 (FSKMTF).

The protein belongs to the RNA methyltransferase RlmH family. As to quaternary structure, homodimer.

The protein resides in the cytoplasm. It carries out the reaction pseudouridine(1915) in 23S rRNA + S-adenosyl-L-methionine = N(3)-methylpseudouridine(1915) in 23S rRNA + S-adenosyl-L-homocysteine + H(+). Specifically methylates the pseudouridine at position 1915 (m3Psi1915) in 23S rRNA. The protein is Ribosomal RNA large subunit methyltransferase H of Bifidobacterium longum (strain DJO10A).